The primary structure comprises 131 residues: Small ribosomal subunit protein uS19 (131 aa).

The protein belongs to the universal ribosomal protein uS19 family.

In terms of biological role, protein S19 forms a complex with S13 that binds strongly to the 16S ribosomal RNA. This Cenarchaeum symbiosum (strain A) protein is Small ribosomal subunit protein uS19.